A 476-amino-acid polypeptide reads, in one-letter code: Zinc metalloproteinase/disintegrin (476 aa).

Positions 1–20 (MIQVLLVTICLAAFPYQGSS) are cleaved as a signal peptide. A propeptide spanning residues 21–192 (IILESGNVND…ASQSNLTPEQ (172 aa)) is cleaved from the precursor. Pyrrolidone carboxylic acid is present on Gln-193. The 196-residue stretch at 198–393 (RYIELAVVAD…HNPQCILNKP (196 aa)) folds into the Peptidase M12B domain. Ca(2+)-binding residues include Glu-201 and Asp-285. 3 disulfide bridges follow: Cys-309/Cys-388, Cys-348/Cys-372, and Cys-350/Cys-355. Position 334 (His-334) interacts with Zn(2+). Glu-335 is a catalytic residue. Residues His-338 and His-344 each coordinate Zn(2+). Positions 388 and 391 each coordinate Ca(2+). Positions 394-403 (LTTVSGNELL) are excised as a propeptide. The Disintegrin domain maps to 395-476 (TTVSGNELLE…ADCPRNRFHA (82 aa)). 6 disulfide bridges follow: Cys-409/Cys-424, Cys-411/Cys-419, Cys-418/Cys-441, Cys-432/Cys-438, Cys-437/Cys-462, and Cys-450/Cys-469. Residues 454 to 456 (RGD) carry the Cell attachment site motif.

It belongs to the venom metalloproteinase (M12B) family. P-II subfamily. P-IIa sub-subfamily. In terms of assembly, monomer (metalloprotease). The cofactor is Zn(2+). Post-translationally, the N-terminus is blocked. In terms of processing, not glycosylated. Expressed by the venom gland.

It localises to the secreted. Its activity is regulated as follows. Inhibited by EDTA, and 1,10-phenanthroline, but not by PMSF. Non-hemorrhagic proteinase that activates prothrombin (F2) calcium-independently. Activates factor X (F10) and hydrolyzes the Aalpha-chain and more slowly the Bbeta-chain of fibrin and fibrinogen without affecting the gamma chain. It induces neither detachment nor apoptosis of human endothelial cells and is also not able to trigger an endothelial pro-inflammatory cell response. Nitric oxide and prostacyclin levels released by endothelial cells are significantly increased after treatment with insularinase A. In terms of biological role, inhibits ADP-induced platelet aggregation (IC(50)=0.8 uM for native protein). Interestingly, inhibits the adhesion of HUVECs to immobilized fibrinogen at very low concentrations (IC(50)=36 nM). The sequence is that of Zinc metalloproteinase/disintegrin from Bothrops insularis (Golden lancehead).